The sequence spans 799 residues: Phenylalanine--tRNA ligase beta subunit (799 aa).

Residues 40 to 147 (KSHLSSVITV…KDTTLGISVR (108 aa)) form the tRNA-binding domain. One can recognise a B5 domain in the interval 402–479 (SKTVTIETNL…RTIGYASIRT (78 aa)). Positions 457, 463, 466, and 467 each coordinate Mg(2+). The FDX-ACB domain maps to 707-799 (SHFPQGQLDL…TAKSNGYSLR (93 aa)).

Belongs to the phenylalanyl-tRNA synthetase beta subunit family. Type 1 subfamily. As to quaternary structure, tetramer of two alpha and two beta subunits. It depends on Mg(2+) as a cofactor.

The protein resides in the cytoplasm. It carries out the reaction tRNA(Phe) + L-phenylalanine + ATP = L-phenylalanyl-tRNA(Phe) + AMP + diphosphate + H(+). The polypeptide is Phenylalanine--tRNA ligase beta subunit (Leptospira biflexa serovar Patoc (strain Patoc 1 / Ames)).